A 1105-amino-acid chain; its full sequence is Protein phosphatase 1 regulatory subunit 26 (1105 aa).

4 disordered regions span residues 228 to 382 (LNDK…NKLA), 444 to 468 (QSTYVIPTEPPPPPPEPQCDSDSLV), 504 to 526 (TSPELGSQSSKLSLTHKRKAKAM), and 589 to 748 (LNRG…DSDD). Residues 275 to 285 (LLRKHASDSKL) show a composition bias toward basic and acidic residues. Residues 306-317 (TKTSSPSPKSTP) are compositionally biased toward low complexity. Residues 359-368 (SPTSANSLTH) show a composition bias toward polar residues. The span at 451–460 (TEPPPPPPEP) shows a compositional bias: pro residues. A compositionally biased stretch (polar residues) spans 504 to 516 (TSPELGSQSSKLS). The segment covering 602-612 (SYSSGDKSSSL) has biased composition (low complexity). Residues 628–647 (SKRKYKKRPKDGKSQCKKRV) show a composition bias toward basic residues. A compositionally biased stretch (basic and acidic residues) spans 686-701 (NSLEKSKKRREEKAVE). Residues 705–715 (PSCSSSPQGNK) are compositionally biased toward polar residues. Basic and acidic residues predominate over residues 733–742 (RALDDAHESS).

Its subcellular location is the nucleus. It localises to the nucleolus. Its function is as follows. May inhibit phosphatase activity of protein phosphatase 1 (PP1) complexes. May positively regulate cell proliferation. This is Protein phosphatase 1 regulatory subunit 26 (ppp1r26) from Xenopus laevis (African clawed frog).